A 634-amino-acid chain; its full sequence is Threonine--tRNA ligase (634 aa).

One can recognise a TGS domain in the interval 1-61 (MFEVKLKDGS…DSDCEVQFVK (61 aa)). The tract at residues 242–532 (DHRKIGKEMG…LIEHYAGKFP (291 aa)) is catalytic. Residues Cys333, His384, and His509 each contribute to the Zn(2+) site.

This sequence belongs to the class-II aminoacyl-tRNA synthetase family. In terms of assembly, homodimer. Requires Zn(2+) as cofactor.

The protein localises to the cytoplasm. It carries out the reaction tRNA(Thr) + L-threonine + ATP = L-threonyl-tRNA(Thr) + AMP + diphosphate + H(+). In terms of biological role, catalyzes the attachment of threonine to tRNA(Thr) in a two-step reaction: L-threonine is first activated by ATP to form Thr-AMP and then transferred to the acceptor end of tRNA(Thr). Also edits incorrectly charged L-seryl-tRNA(Thr). In Finegoldia magna (strain ATCC 29328 / DSM 20472 / WAL 2508) (Peptostreptococcus magnus), this protein is Threonine--tRNA ligase.